Reading from the N-terminus, the 303-residue chain is Elongation factor Ts (303 aa).

Positions 80 to 83 (TDFV) are involved in Mg(2+) ion dislocation from EF-Tu.

This sequence belongs to the EF-Ts family.

The protein resides in the cytoplasm. Associates with the EF-Tu.GDP complex and induces the exchange of GDP to GTP. It remains bound to the aminoacyl-tRNA.EF-Tu.GTP complex up to the GTP hydrolysis stage on the ribosome. This is Elongation factor Ts from Clostridium perfringens (strain SM101 / Type A).